The following is a 292-amino-acid chain: Acetylglutamate kinase (292 aa).

Substrate is bound by residues 64–65, Arg86, and Asn190; that span reads GG.

The protein belongs to the acetylglutamate kinase family. ArgB subfamily.

Its subcellular location is the cytoplasm. It catalyses the reaction N-acetyl-L-glutamate + ATP = N-acetyl-L-glutamyl 5-phosphate + ADP. It participates in amino-acid biosynthesis; L-arginine biosynthesis; N(2)-acetyl-L-ornithine from L-glutamate: step 2/4. Functionally, catalyzes the ATP-dependent phosphorylation of N-acetyl-L-glutamate. This Geobacter sp. (strain M21) protein is Acetylglutamate kinase.